Reading from the N-terminus, the 288-residue chain is Pirin-like protein CC_3178 (288 aa).

Belongs to the pirin family.

This is Pirin-like protein CC_3178 from Caulobacter vibrioides (strain ATCC 19089 / CIP 103742 / CB 15) (Caulobacter crescentus).